The primary structure comprises 149 residues: Large ribosomal subunit protein uL15 (149 aa).

Over residues 1 to 12 (MSEPIKLHDLRP) the composition is skewed to basic and acidic residues. Residues 1–55 (MSEPIKLHDLRPAKGANKPKTRVGRGEASKGKTAGRGTKGTKARKQVSAAFEGGQ) form a disordered region.

This sequence belongs to the universal ribosomal protein uL15 family. As to quaternary structure, part of the 50S ribosomal subunit.

Its function is as follows. Binds to the 23S rRNA. This Corynebacterium kroppenstedtii (strain DSM 44385 / JCM 11950 / CIP 105744 / CCUG 35717) protein is Large ribosomal subunit protein uL15.